The sequence spans 273 residues: Dermonecrotic toxin LarSicTox-alphaIB1aiv (273 aa).

His-5 is a catalytic residue. Residues Glu-25 and Asp-27 each contribute to the Mg(2+) site. His-41 acts as the Nucleophile in catalysis. Cystine bridges form between Cys-45–Cys-51 and Cys-47–Cys-190. Mg(2+) is bound at residue Asp-85. A glycan (N-linked (GlcNAc...) asparagine) is linked at Asn-250.

Belongs to the arthropod phospholipase D family. Class II subfamily. Mg(2+) is required as a cofactor. As to expression, expressed by the venom gland.

Its subcellular location is the secreted. The enzyme catalyses an N-(acyl)-sphingosylphosphocholine = an N-(acyl)-sphingosyl-1,3-cyclic phosphate + choline. The catalysed reaction is an N-(acyl)-sphingosylphosphoethanolamine = an N-(acyl)-sphingosyl-1,3-cyclic phosphate + ethanolamine. It carries out the reaction a 1-acyl-sn-glycero-3-phosphocholine = a 1-acyl-sn-glycero-2,3-cyclic phosphate + choline. It catalyses the reaction a 1-acyl-sn-glycero-3-phosphoethanolamine = a 1-acyl-sn-glycero-2,3-cyclic phosphate + ethanolamine. Its function is as follows. Dermonecrotic toxins cleave the phosphodiester linkage between the phosphate and headgroup of certain phospholipids (sphingolipid and lysolipid substrates), forming an alcohol (often choline) and a cyclic phosphate. This toxin acts on sphingomyelin (SM). It may also act on ceramide phosphoethanolamine (CPE), lysophosphatidylcholine (LPC) and lysophosphatidylethanolamine (LPE), but not on lysophosphatidylserine (LPS), and lysophosphatidylglycerol (LPG). It acts by transphosphatidylation, releasing exclusively cyclic phosphate products as second products. Induces dermonecrosis, hemolysis, increased vascular permeability, edema, inflammatory response, and platelet aggregation. The polypeptide is Dermonecrotic toxin LarSicTox-alphaIB1aiv (Loxosceles arizonica (Arizona brown spider)).